Reading from the N-terminus, the 112-residue chain is Putative pterin-4-alpha-carbinolamine dehydratase (112 aa).

This sequence belongs to the pterin-4-alpha-carbinolamine dehydratase family.

It catalyses the reaction (4aS,6R)-4a-hydroxy-L-erythro-5,6,7,8-tetrahydrobiopterin = (6R)-L-erythro-6,7-dihydrobiopterin + H2O. The protein is Putative pterin-4-alpha-carbinolamine dehydratase of Shewanella frigidimarina (strain NCIMB 400).